The primary structure comprises 521 residues: Bifunctional purine biosynthesis protein PurH (521 aa).

Residues 1 to 145 (MIKQALISVS…KNHKDVIVIC (145 aa)) enclose the MGS-like domain.

It belongs to the PurH family.

It carries out the reaction (6R)-10-formyltetrahydrofolate + 5-amino-1-(5-phospho-beta-D-ribosyl)imidazole-4-carboxamide = 5-formamido-1-(5-phospho-D-ribosyl)imidazole-4-carboxamide + (6S)-5,6,7,8-tetrahydrofolate. It catalyses the reaction IMP + H2O = 5-formamido-1-(5-phospho-D-ribosyl)imidazole-4-carboxamide. The protein operates within purine metabolism; IMP biosynthesis via de novo pathway; 5-formamido-1-(5-phospho-D-ribosyl)imidazole-4-carboxamide from 5-amino-1-(5-phospho-D-ribosyl)imidazole-4-carboxamide (10-formyl THF route): step 1/1. It functions in the pathway purine metabolism; IMP biosynthesis via de novo pathway; IMP from 5-formamido-1-(5-phospho-D-ribosyl)imidazole-4-carboxamide: step 1/1. This is Bifunctional purine biosynthesis protein PurH from Janthinobacterium sp. (strain Marseille) (Minibacterium massiliensis).